Reading from the N-terminus, the 145-residue chain is ATP synthase epsilon chain (145 aa).

The protein belongs to the ATPase epsilon chain family. In terms of assembly, F-type ATPases have 2 components, CF(1) - the catalytic core - and CF(0) - the membrane proton channel. CF(1) has five subunits: alpha(3), beta(3), gamma(1), delta(1), epsilon(1). CF(0) has three main subunits: a, b and c.

Its subcellular location is the cell inner membrane. Its function is as follows. Produces ATP from ADP in the presence of a proton gradient across the membrane. In Francisella tularensis subsp. mediasiatica (strain FSC147), this protein is ATP synthase epsilon chain.